Consider the following 146-residue polypeptide: Snaclec rhodocytin subunit beta (146 aa).

The first 23 residues, 1-23, serve as a signal peptide directing secretion; sequence MGRFIFVSFGLLVVFLSLSGTGA. Cystine bridges form between Cys-25/Cys-36, Cys-53/Cys-142, and Cys-119/Cys-134. A C-type lectin domain is found at 32 to 143; it reads YEGHCYKPFN…CSSTCSFVCK (112 aa).

The protein belongs to the snaclec family. Dimer (non-covalently linked) of heterodimers of subunits alpha and beta (disulfide-linked). As to expression, expressed by the venom gland.

Its subcellular location is the secreted. Its function is as follows. Elicits platelet aggregation by the binding to the C-type lectin domain family 1 member B (CLEC1B/CLEC2). Binding leads to tyrosine phosphorylation in the cytoplasmic tail of CLEC1B, which promotes the binding of spleen tyrosine kinase (Syk), subsequent activation of PLCgamma2, and platelet activation and aggregation. Binding to GPIbalpha (GP1BA) and alpha2/beta-1 (ITGA2/ITGB1) may also induce aggregation, but this is controversial. This Calloselasma rhodostoma (Malayan pit viper) protein is Snaclec rhodocytin subunit beta.